We begin with the raw amino-acid sequence, 510 residues long: NAD(P)H-quinone oxidoreductase subunit 2 A, chloroplastic (510 aa).

Transmembrane regions (helical) follow at residues 24-44 (LLLF…GLIL), 59-79 (WFYF…LFRW), 99-119 (IFQF…VEYI), 124-144 (MAIT…MFLC), 149-169 (LITI…LSGY), 183-203 (YLLM…WLYG), 229-249 (ISLA…PAPF), 295-315 (WHLL…LLAI), 323-343 (MLAY…IVGD), 354-374 (YMLF…LFGL), 395-415 (ALSL…AGFF), and 418-438 (LYLF…IGLL).

The protein belongs to the complex I subunit 2 family. As to quaternary structure, NDH is composed of at least 16 different subunits, 5 of which are encoded in the nucleus.

The protein localises to the plastid. It localises to the chloroplast thylakoid membrane. It carries out the reaction a plastoquinone + NADH + (n+1) H(+)(in) = a plastoquinol + NAD(+) + n H(+)(out). It catalyses the reaction a plastoquinone + NADPH + (n+1) H(+)(in) = a plastoquinol + NADP(+) + n H(+)(out). NDH shuttles electrons from NAD(P)H:plastoquinone, via FMN and iron-sulfur (Fe-S) centers, to quinones in the photosynthetic chain and possibly in a chloroplast respiratory chain. The immediate electron acceptor for the enzyme in this species is believed to be plastoquinone. Couples the redox reaction to proton translocation, and thus conserves the redox energy in a proton gradient. This is NAD(P)H-quinone oxidoreductase subunit 2 A, chloroplastic from Triticum aestivum (Wheat).